Here is a 354-residue protein sequence, read N- to C-terminus: Neuronal growth regulator 1 (354 aa).

A signal peptide spans 1–37 (MDMMLLVQGACCSNQWLAAVLLSLCCLLPSCLPAGQS). Ig-like C2-type domains follow at residues 38-134 (VDFP…VHLT), 139-221 (PKIY…KVVV), and 225-313 (PTIQ…LPLN). Cysteines 60 and 118 form a disulfide. Residues asparagine 73 and asparagine 155 are each glycosylated (N-linked (GlcNAc...) asparagine). Intrachain disulfides connect cysteine 160/cysteine 203 and cysteine 245/cysteine 297. The residue at position 187 (tyrosine 187) is a Phosphotyrosine. N-linked (GlcNAc...) asparagine glycans are attached at residues asparagine 275, asparagine 286, asparagine 294, and asparagine 307. Glycine 324 carries the GPI-anchor amidated glycine lipid modification. Positions 325–354 (SADVLFSCWYLVLTLSSFTSIFYLKNAILQ) are cleaved as a propeptide — removed in mature form.

This sequence belongs to the immunoglobulin superfamily. IgLON family.

It localises to the cell membrane. Its function is as follows. May be involved in cell-adhesion. May function as a trans-neural growth-promoting factor in regenerative axon sprouting in the mammalian brain. This is Neuronal growth regulator 1 (NEGR1) from Homo sapiens (Human).